The sequence spans 244 residues: Protein-lysine methyltransferase METTL21E (244 aa).

The disordered stretch occupies residues 1–20 (MDLTVTHITHKETYKEPRDD). Residues 9-18 (THKETYKEPR) are compositionally biased toward basic and acidic residues. S-adenosyl-L-methionine contacts are provided by residues Trp69, 97–99 (GAG), Asp118, Trp149, and Ala170.

The protein belongs to the methyltransferase superfamily. METTL21 family.

Protein-lysine methyltransferase. The polypeptide is Protein-lysine methyltransferase METTL21E (Mettl21e) (Mus musculus (Mouse)).